Here is a 285-residue protein sequence, read N- to C-terminus: Transcription initiation factor IIE subunit beta (285 aa).

2 stretches are compositionally biased toward polar residues: residues Met-1–Ser-10 and Thr-33–His-44. The segment at Met-1–Leu-56 is disordered. The segment covering Ser-45–Ser-55 has biased composition (low complexity). Positions Tyr-67–Arg-142 form a DNA-binding region, TFIIE beta. Residues Pro-240–Thr-272 are disordered. The segment covering Lys-258–Lys-268 has biased composition (basic residues).

It belongs to the TFIIE beta subunit family. As to quaternary structure, TFIIE is a tetramer of two alpha (tfa1) and two beta (tfa2) subunits. TFIIE associates with RNA polymerase II via the beta subunit.

The protein resides in the nucleus. Its function is as follows. Recruits TFIIH to the initiation complex and stimulates the RNA polymerase II C-terminal domain kinase and DNA-dependent ATPase activities of TFIIH. Both TFIIH and TFIIE are required for promoter clearance by RNA polymerase. The sequence is that of Transcription initiation factor IIE subunit beta (tfa2) from Schizosaccharomyces pombe (strain 972 / ATCC 24843) (Fission yeast).